The primary structure comprises 466 residues: Glycosyl hydrolase family 109 protein (466 aa).

A signal peptide (tat-type signal) is located at residues 1–30 (MENTRRSFLKKVSAAGIGAAGLAMAGNAGA). Residues 59 to 60 (SR), Asp-81, 130 to 133 (WEWH), 151 to 152 (EV), and Asn-180 contribute to the NAD(+) site. Tyr-209 is a binding site for substrate. Residue 241 to 245 (AEAQW) coordinates NAD(+). Substrate-binding positions include Arg-246, 258-261 (YPTH), and Tyr-340. Tyr-258 serves as a coordination point for NAD(+).

This sequence belongs to the Gfo/Idh/MocA family. Glycosyl hydrolase 109 subfamily. NAD(+) serves as cofactor. Post-translationally, predicted to be exported by the Tat system. The position of the signal peptide cleavage has not been experimentally proven.

In terms of biological role, glycosidase. The protein is Glycosyl hydrolase family 109 protein of Parabacteroides distasonis (strain ATCC 8503 / DSM 20701 / CIP 104284 / JCM 5825 / NCTC 11152).